Reading from the N-terminus, the 498-residue chain is Sulfate adenylyltransferase subunit 1 (498 aa).

One can recognise a tr-type G domain in the interval 30-246; the sequence is TRPLRLITCG…LELATTRSAQ (217 aa). Residues 39–46 form a G1 region; sequence GSVDDGKS. Residue 39–46 coordinates GTP; it reads GSVDDGKS. The interval 97–101 is G2; the sequence is GITID. Residues 118-121 are G3; that stretch reads DTPG. GTP-binding positions include 118-122 and 173-176; these read DTPGH and NKID. The interval 173–176 is G4; it reads NKID. Positions 210-212 are G5; sequence SAL.

This sequence belongs to the TRAFAC class translation factor GTPase superfamily. Classic translation factor GTPase family. CysN/NodQ subfamily. As to quaternary structure, heterodimer composed of CysD, the smaller subunit, and CysN.

It catalyses the reaction sulfate + ATP + H(+) = adenosine 5'-phosphosulfate + diphosphate. It participates in sulfur metabolism; hydrogen sulfide biosynthesis; sulfite from sulfate: step 1/3. With CysD forms the ATP sulfurylase (ATPS) that catalyzes the adenylation of sulfate producing adenosine 5'-phosphosulfate (APS) and diphosphate, the first enzymatic step in sulfur assimilation pathway. APS synthesis involves the formation of a high-energy phosphoric-sulfuric acid anhydride bond driven by GTP hydrolysis by CysN coupled to ATP hydrolysis by CysD. The protein is Sulfate adenylyltransferase subunit 1 of Rhizobium meliloti (strain 1021) (Ensifer meliloti).